Here is a 371-residue protein sequence, read N- to C-terminus: Ferrochelatase (371 aa).

H218 and E299 together coordinate Fe cation.

This sequence belongs to the ferrochelatase family.

It is found in the cytoplasm. It carries out the reaction heme b + 2 H(+) = protoporphyrin IX + Fe(2+). Its pathway is porphyrin-containing compound metabolism; protoheme biosynthesis; protoheme from protoporphyrin-IX: step 1/1. In terms of biological role, catalyzes the ferrous insertion into protoporphyrin IX. The polypeptide is Ferrochelatase (Ralstonia nicotianae (strain ATCC BAA-1114 / GMI1000) (Ralstonia solanacearum)).